We begin with the raw amino-acid sequence, 348 residues long: Uroporphyrinogen decarboxylase (348 aa).

Residues 23-27 (RQAGR), Asp72, Tyr148, Ser203, and His316 contribute to the substrate site.

It belongs to the uroporphyrinogen decarboxylase family. Homodimer.

The protein localises to the cytoplasm. The catalysed reaction is uroporphyrinogen III + 4 H(+) = coproporphyrinogen III + 4 CO2. Its pathway is porphyrin-containing compound metabolism; protoporphyrin-IX biosynthesis; coproporphyrinogen-III from 5-aminolevulinate: step 4/4. Catalyzes the decarboxylation of four acetate groups of uroporphyrinogen-III to yield coproporphyrinogen-III. The polypeptide is Uroporphyrinogen decarboxylase (Myxococcus xanthus (strain DK1622)).